The primary structure comprises 190 residues: Hypoxanthine/guanine phosphoribosyltransferase (190 aa).

It belongs to the purine/pyrimidine phosphoribosyltransferase family. Archaeal HPRT subfamily. As to quaternary structure, homodimer.

The protein resides in the cytoplasm. The enzyme catalyses IMP + diphosphate = hypoxanthine + 5-phospho-alpha-D-ribose 1-diphosphate. It catalyses the reaction GMP + diphosphate = guanine + 5-phospho-alpha-D-ribose 1-diphosphate. The protein operates within purine metabolism; IMP biosynthesis via salvage pathway; IMP from hypoxanthine: step 1/1. Its function is as follows. Catalyzes a salvage reaction resulting in the formation of IMP that is energically less costly than de novo synthesis. The chain is Hypoxanthine/guanine phosphoribosyltransferase from Methanohalophilus mahii (strain ATCC 35705 / DSM 5219 / SLP).